The sequence spans 474 residues: tRNA-2-methylthio-N(6)-dimethylallyladenosine synthase (474 aa).

The MTTase N-terminal domain maps to 3–120 (KKLHIKTWGC…LPDMIDQVRR (118 aa)). [4Fe-4S] cluster contacts are provided by C12, C49, C83, C157, C161, and C164. Residues 143–375 (RAEGPTAFVS…QDRITQQAMR (233 aa)) enclose the Radical SAM core domain. The 64-residue stretch at 378–441 (RHMMGTVQRI…TNSLRGKFIR (64 aa)) folds into the TRAM domain.

It belongs to the methylthiotransferase family. MiaB subfamily. As to quaternary structure, monomer. [4Fe-4S] cluster serves as cofactor.

It localises to the cytoplasm. It catalyses the reaction N(6)-dimethylallyladenosine(37) in tRNA + (sulfur carrier)-SH + AH2 + 2 S-adenosyl-L-methionine = 2-methylsulfanyl-N(6)-dimethylallyladenosine(37) in tRNA + (sulfur carrier)-H + 5'-deoxyadenosine + L-methionine + A + S-adenosyl-L-homocysteine + 2 H(+). Functionally, catalyzes the methylthiolation of N6-(dimethylallyl)adenosine (i(6)A), leading to the formation of 2-methylthio-N6-(dimethylallyl)adenosine (ms(2)i(6)A) at position 37 in tRNAs that read codons beginning with uridine. In Shewanella sp. (strain ANA-3), this protein is tRNA-2-methylthio-N(6)-dimethylallyladenosine synthase.